The sequence spans 320 residues: 33 kDa chaperonin (320 aa).

The segment covering Met-1–Ser-17 has biased composition (basic and acidic residues). Residues Met-1–Asp-27 form a disordered region. Intrachain disulfides connect Cys-262-Cys-264 and Cys-295-Cys-298.

This sequence belongs to the HSP33 family. Under oxidizing conditions two disulfide bonds are formed involving the reactive cysteines. Under reducing conditions zinc is bound to the reactive cysteines and the protein is inactive.

Its subcellular location is the cytoplasm. Functionally, redox regulated molecular chaperone. Protects both thermally unfolding and oxidatively damaged proteins from irreversible aggregation. Plays an important role in the bacterial defense system toward oxidative stress. This chain is 33 kDa chaperonin, found in Synechococcus sp. (strain JA-3-3Ab) (Cyanobacteria bacterium Yellowstone A-Prime).